The following is a 351-amino-acid chain: Peptide chain release factor 1 (351 aa).

Glutamine 229 is subject to N5-methylglutamine.

The protein belongs to the prokaryotic/mitochondrial release factor family. Post-translationally, methylated by PrmC. Methylation increases the termination efficiency of RF1.

It localises to the cytoplasm. Peptide chain release factor 1 directs the termination of translation in response to the peptide chain termination codons UAG and UAA. In Ruegeria pomeroyi (strain ATCC 700808 / DSM 15171 / DSS-3) (Silicibacter pomeroyi), this protein is Peptide chain release factor 1.